The following is a 179-amino-acid chain: UPF0227 protein Shewana3_2292 (179 aa).

It belongs to the UPF0227 family.

In Shewanella sp. (strain ANA-3), this protein is UPF0227 protein Shewana3_2292.